Consider the following 505-residue polypeptide: E3 SUMO-protein ligase PIAS4-A (505 aa).

The SAP domain occupies 12–46 (VKSFRVSDLQTLLASMGRSKSGLKQDLVGRALRLV). The LXXLL motif signature appears at 20 to 24 (LQTLL). Lys35 is covalently cross-linked (Glycyl lysine isopeptide (Lys-Gly) (interchain with G-Cter in SUMO); alternate). Residue Lys35 forms a Glycyl lysine isopeptide (Lys-Gly) (interchain with G-Cter in SUMO2); alternate linkage. Residues Lys56 and Lys68 each participate in a glycyl lysine isopeptide (Lys-Gly) (interchain with G-Cter in SUMO2) cross-link. The PINIT domain occupies 104-264 (GIPKPAPPPA…SVAVYLVRVF (161 aa)). The SP-RING-type zinc-finger motif lies at 296–381 (PESEIATTGL…LKETPEDVEE (86 aa)). Positions 327, 329, 350, and 353 each coordinate Zn(2+). Residues 374–505 (ETPEDVEEIE…DYDKDLVTAY (132 aa)) form a required for nuclear localization region. Residues 395–407 (DDKEKERERENSR) are compositionally biased toward basic and acidic residues. A disordered region spans residues 395 to 505 (DDKEKERERE…DYDKDLVTAY (111 aa)). The segment covering 437 to 457 (SGSGGASAGTGSTSGGSGGGT) has biased composition (gly residues). Over residues 462-485 (TLDDSSEEEGGGGAEDSEETDDSQ) the composition is skewed to acidic residues. Positions 493-505 (GRYDYDKDLVTAY) are enriched in basic and acidic residues.

Belongs to the PIAS family. Post-translationally, sumoylated. Lys-35 is the main site of sumoylation. As to expression, highly expressed in spleen, liver, and brain. Expressed at lower levels in heart, intestine, kidney, gill, skin, and muscle.

The protein resides in the nucleus. It carries out the reaction S-ubiquitinyl-[E2 ubiquitin-conjugating enzyme]-L-cysteine + [acceptor protein]-L-lysine = [E2 ubiquitin-conjugating enzyme]-L-cysteine + N(6)-ubiquitinyl-[acceptor protein]-L-lysine.. It functions in the pathway protein modification; protein sumoylation. Its function is as follows. Functions as an E3-type small ubiquitin-like modifier (SUMO) ligase. May play a role as a transcriptional coregulator in various cellular pathways. Catalyzes conjugation of SUMO2 to KAT5 in response to DNA damage, facilitating repair of DNA double-strand breaks (DSBs) via homologous recombination (HR). Mediates sumoylation of PARP1 in response to PARP1 trapping to chromatin. Negatively regulates induction of interferon phi 1 (ifnphi1) mediated by mavs and ticam1/trif. Also inhibits ifnphi1-mediated activation of the interferon-stimulated genes (ISGs) pkz and cd40, and to a lesser extent rsad2 and isg15. May inhibit ticam1/trif-mediated activation of NF-kappa-B. This chain is E3 SUMO-protein ligase PIAS4-A, found in Danio rerio (Zebrafish).